The following is a 184-amino-acid chain: UPF0397 protein SA2477 (184 aa).

The next 5 membrane-spanning stretches (helical) occupy residues 11-31 (VVAI…VVIP), 44-64 (AFLA…TGLV), 77-97 (AWWS…WIGL), 111-131 (MIYF…LIAP), and 148-168 (QGVI…TILL).

It belongs to the UPF0397 family.

It localises to the cell membrane. In Staphylococcus aureus (strain N315), this protein is UPF0397 protein SA2477.